Consider the following 732-residue polypeptide: Prolyl 3-hydroxylase 3 (732 aa).

An N-terminal signal peptide occupies residues 1–19; the sequence is MLRLLRLLLLLLLPPPGSP. Over residues 15-25 the composition is skewed to pro residues; sequence PPGSPEPPEPP. Residues 15–35 are disordered; sequence PPGSPEPPEPPGLAQLSPGSP. TPR repeat units follow at residues 39–72, 152–185, 214–247, and 312–345; these read PDLL…RAAL, REPY…NPTH, YWAA…SLAH, and LSQL…YPED. N-linked (GlcNAc...) asparagine glycosylation is found at asparagine 327 and asparagine 458. The Fe2OG dioxygenase domain occupies 557–671; it reads THLVCRSAIE…RCALALWHTW (115 aa). 3 residues coordinate Fe cation: histidine 580, aspartate 582, and histidine 652. Arginine 662 is a catalytic residue. Positions 674 to 703 form a coiled coil; it reads EHSEQEWTEAKELLQEEEEEEEEEDILSRD. Residues 676 to 687 show a composition bias toward basic and acidic residues; it reads SEQEWTEAKELL. The segment at 676–732 is disordered; the sequence is SEQEWTEAKELLQEEEEEEEEEDILSRDPSPEPPSHKLQRVQEKAGKPRRVRVREEL. Residues 688–698 show a composition bias toward acidic residues; it reads QEEEEEEEEED. Over residues 722-732 the composition is skewed to basic residues; the sequence is KPRRVRVREEL. The short motif at 729 to 732 is the Prevents secretion from ER element; it reads REEL.

The protein belongs to the leprecan family. Identified in a complex with PLOD1 and P3H4. The cofactor is Fe cation. L-ascorbate is required as a cofactor. As to expression, detected in kidney (at protein level).

Its subcellular location is the endoplasmic reticulum. The catalysed reaction is L-prolyl-[collagen] + 2-oxoglutarate + O2 = trans-3-hydroxy-L-prolyl-[collagen] + succinate + CO2. Its function is as follows. Part of a complex composed of PLOD1, P3H3 and P3H4 that catalyzes hydroxylation of lysine residues in collagen alpha chains and is required for normal assembly and cross-linkling of collagen fibrils. Required for normal hydroxylation of lysine residues in type I collagen chains in skin, bone, tendon, aorta and cornea. Required for normal skin stability via its role in hydroxylation of lysine residues in collagen alpha chains and in collagen fibril assembly. Apparently not required for normal prolyl 3-hydroxylation on collagen chains, possibly because it functions redundantly with other prolyl 3-hydroxylases. The polypeptide is Prolyl 3-hydroxylase 3 (Mus musculus (Mouse)).